The following is a 229-amino-acid chain: Large ribosomal subunit protein uL1 (229 aa).

It belongs to the universal ribosomal protein uL1 family. In terms of assembly, part of the 50S ribosomal subunit.

Binds directly to 23S rRNA. The L1 stalk is quite mobile in the ribosome, and is involved in E site tRNA release. In terms of biological role, protein L1 is also a translational repressor protein, it controls the translation of the L11 operon by binding to its mRNA. In Actinobacillus pleuropneumoniae serotype 5b (strain L20), this protein is Large ribosomal subunit protein uL1.